We begin with the raw amino-acid sequence, 1157 residues long: MDRSREAEMELRRGPSPPRAGRSHEVDGDKAACHSCCICGKSFPFQSSLSQHMRKHTGEKPYKCPYCDHRASQKGNLKIHIRSHRTGTLIQGHEPEAGEAQLGEMRVSEGLDGCASPTKSTSACNRVLNGAVPMDGSKILLRSSRKEVEGAASAQEDTEATVPCSFCKSRFERKKDLELHVHQAHKPFKCRLCSYVTLREESLLSHIERDHITAQVPNGSEACVENGKPELSPGEFPCEVCGQAFSQTWFLKAHMKKHRGSFDHGCHICGRRFKEPWFLKNHMKAHGPKAGSKNRPKSELDPIATINNVVQEEVIVAGLSLYEVCTKCGNLFTNLDSLNAHNAIHRKVEASRIRAPAEEGDSEDPLDTKQFFLQCLNLTPYVAGDVSPGGQAGRRVAELDPVNSYQAWQLATRGKVAEPAEYLKYGTWDEALAGDVAFDKDKREYILVSQEKRKREQDAPATQAPPRKRASVPGDPMLSGHLDPRPTSRPNRRASATTGQGKSSECFECGKIFRTYHQMVLHSRVHRRARRDRDPEGDRAARARCGSLSEGDSASQPSSPGSACAIADSPGLAEEVVDDSGEEAVPEPASGGQPRHCCSSGEVTPTALSNGDQNHKLGNNLPEKDISEPKVGSAMPSVSILENSSRETTKGPEQHRYSLDLKMPAFHPKQEVPSTTDRVDFPASMEITSLQHTLDSQAGHSKEKLSDLHKEHCGVGKRASAPDLVPLDLSMRSSRDEPSGKEACSLQAALVIHPCPYCTHKTYYPEVLWMHKRIWHRVSCSSVAPPWTQPSGHKSIRSNLVFLTRSGRTGPPPALGGKECQPLLLSRFARTQVPGGAPGSKGSSSPLGVTTKAASMPKNKESHSGGPCALWASGPDGYRQTRAGHGQEPPSAAVQGPLAKPKQEGSSRLAPSPGSGSLSRSTTPTPSVITRVGAQPSANSKPVEKLGGPAVGTGFTPPNKHSAPDSLKAKFSPQPQGQPPLKGEGGSPLPPREPSVKAAQELRTLATCAAGSRGEAALQAPPGAPPTLNSAKQEPAAEGQEKRLDILSIFKTYIPKDFATLYQGWGVSSPGPEHRGTSLTGTPRTQAHQGDFVCVECGKSFHQPSQLRAHLRAHTVVFECDGPRDSEVHTASTDAPKQGRDHTTPGTVPAGPLRKGI.

The segment covering 1–13 (MDRSREAEMELRR) has biased composition (basic and acidic residues). Residues 1 to 26 (MDRSREAEMELRRGPSPPRAGRSHEV) form a disordered region. The tract at residues 1 to 420 (MDRSREAEME…ATRGKVAEPA (420 aa)) is mediates promoter DNA-binding and activation of transcription. 7 consecutive C2H2-type zinc fingers follow at residues 34-56 (HSCCICGKSFPFQSSLSQHMRKH), 62-84 (YKCPYCDHRASQKGNLKIHIRSH), 162-185 (VPCSFCKSRFERKKDLELHVHQAH), 188-211 (FKCRLCSYVTLREESLLSHIERDH), 236-258 (FPCEVCGQAFSQTWFLKAHMKKH), 264-286 (HGCHICGRRFKEPWFLKNHMKAH), and 323-345 (EVCTKCGNLFTNLDSLNAHNAIH). The segment covering 449–458 (SQEKRKREQD) has biased composition (basic and acidic residues). Disordered regions lie at residues 449-503 (SQEK…QGKS) and 523-653 (SRVH…KGPE). Residues 494–503 (ASATTGQGKS) show a composition bias toward polar residues. A C2H2-type 8 zinc finger spans residues 504-526 (SECFECGKIFRTYHQMVLHSRVH). The span at 531 to 541 (RDRDPEGDRAA) shows a compositional bias: basic and acidic residues. Polar residues predominate over residues 550 to 561 (EGDSASQPSSPG). The segment covering 575-585 (EVVDDSGEEAV) has biased composition (acidic residues). Over residues 601–612 (GEVTPTALSNGD) the composition is skewed to polar residues. Lysine 630 participates in a covalent cross-link: Glycyl lysine isopeptide (Lys-Gly) (interchain with G-Cter in SUMO2). The segment covering 644–653 (SSRETTKGPE) has biased composition (basic and acidic residues). Lysine 669 is covalently cross-linked (Glycyl lysine isopeptide (Lys-Gly) (interchain with G-Cter in SUMO2)). A C2H2-type 9; atypical zinc finger spans residues 753–776 (HPCPYCTHKTYYPEVLWMHKRIWH). Disordered regions lie at residues 831 to 996 (TQVP…EPSV) and 1013 to 1040 (RGEAALQAPPGAPPTLNSAKQEPAAEGQ). The segment covering 914–928 (GSGSLSRSTTPTPSV) has biased composition (polar residues). Glycyl lysine isopeptide (Lys-Gly) (interchain with G-Cter in SUMO2) cross-links involve residues lysine 1032 and lysine 1051. A C2H2-type 10 zinc finger spans residues 1092 to 1114 (FVCVECGKSFHQPSQLRAHLRAH). A disordered region spans residues 1123–1157 (PRDSEVHTASTDAPKQGRDHTTPGTVPAGPLRKGI).

It belongs to the krueppel C2H2-type zinc-finger protein family. In terms of assembly, interacts with PRDM16; the interaction is direct and may play a role in the transcription of brown adipose tissue-specific genes. Interacts with PWWP2B. Interacts with HDAC1; this interaction is enhanced in the presence of PWWP2B. Expressed by adipocytes more specifically in brown adipose tissue compared to white adipose tissue (WAT).

Its subcellular location is the nucleus. In terms of biological role, transcriptional regulator that binds to the promoter and activates the transcription of genes promoting brown adipose tissue (BAT) differentiation. Among brown adipose tissue-specific genes, binds the proximal region of the promoter of the UCP1 gene to activate its transcription and thereby regulate thermogenesis. May also play a role in the cellular response to replication stress. This Mus musculus (Mouse) protein is Zinc finger protein 516.